The primary structure comprises 743 residues: tRNA(Met) cytidine acetyltransferase TmcA (743 aa).

ATP contacts are provided by residues Q216, 241–250 (GRGKSASIGL), and R390. Residues 420 to 604 (LKIEDVSQEE…YSVIVIRALS (185 aa)) form the N-acetyltransferase domain. Residues 531–533 (IAV) and 538–544 (QGKGIGS) contribute to the acetyl-CoA site.

The protein belongs to the RNA cytidine acetyltransferase family. TmcA subfamily.

Its subcellular location is the cytoplasm. The enzyme catalyses cytidine(34) in elongator tRNA(Met) + acetyl-CoA + ATP + H2O = N(4)-acetylcytidine(34) in elongator tRNA(Met) + ADP + phosphate + CoA + H(+). Functionally, catalyzes the formation of N(4)-acetylcytidine (ac(4)C) at the wobble position of tRNA(Met), by using acetyl-CoA as an acetyl donor and ATP (or GTP). The protein is tRNA(Met) cytidine acetyltransferase TmcA of Saccharolobus islandicus (strain Y.G.57.14 / Yellowstone #1) (Sulfolobus islandicus).